Here is a 508-residue protein sequence, read N- to C-terminus: Photosystem II CP47 reaction center protein (508 aa).

6 consecutive transmembrane segments (helical) span residues 21–36 (SVHI…WAGS), 101–115 (IVFS…IWHW), 140–156 (GIHL…FGAF), 203–218 (IAAG…FHLS), 237–252 (VLSS…AFVV), and 457–472 (SFAL…HGAR).

Belongs to the PsbB/PsbC family. PsbB subfamily. In terms of assembly, PSII is composed of 1 copy each of membrane proteins PsbA, PsbB, PsbC, PsbD, PsbE, PsbF, PsbH, PsbI, PsbJ, PsbK, PsbL, PsbM, PsbT, PsbX, PsbY, PsbZ, Psb30/Ycf12, at least 3 peripheral proteins of the oxygen-evolving complex and a large number of cofactors. It forms dimeric complexes. Binds multiple chlorophylls. PSII binds additional chlorophylls, carotenoids and specific lipids. is required as a cofactor.

The protein localises to the plastid. It localises to the chloroplast thylakoid membrane. One of the components of the core complex of photosystem II (PSII). It binds chlorophyll and helps catalyze the primary light-induced photochemical processes of PSII. PSII is a light-driven water:plastoquinone oxidoreductase, using light energy to abstract electrons from H(2)O, generating O(2) and a proton gradient subsequently used for ATP formation. The sequence is that of Photosystem II CP47 reaction center protein from Vitis vinifera (Grape).